The primary structure comprises 218 residues: uncharacterized protein (218 aa).

Transmembrane regions (helical) follow at residues 27 to 49, 57 to 77, 115 to 135, 142 to 162, and 180 to 200; these read IALE…GFLA, GGVL…GYWV, VFFG…AGIV, FLLY…SLAY, and FSWF…VFHF.

This sequence belongs to the DedA family.

The protein localises to the cell membrane. This is an uncharacterized protein from Synechocystis sp. (strain ATCC 27184 / PCC 6803 / Kazusa).